We begin with the raw amino-acid sequence, 1218 residues long: NACHT, LRR and PYD domains-containing protein 1 allele 2 (1218 aa).

A disordered region spans residues 1–61 (MEESQSKQES…SLPGWSSTSK (61 aa)). Polar residues predominate over residues 7–29 (KQESNTRVAQHGSQQDVDPTFQT). Positions 175–484 (QLVIIEGAAG…EFFAAMSYIL (310 aa)) constitute an NACHT domain. 181–188 (GAAGIGKS) serves as a coordination point for ATP. LRR repeat units lie at residues 343–364 (KERN…LTLC), 673–693 (NLEE…RSLC), and 730–750 (RLAE…RQLC). The segment covering 799-815 (TMPTENTDGEESLTSSK) has biased composition (polar residues). Residues 799–842 (TMPTENTDGEESLTSSKQQQQQSGDKHMEPLGTDDDFWGPSGPV) are disordered. The tract at residues 835-968 (FWGPSGPVST…HFAVLENPSF (134 aa)) is ZU5. An FIIND domain is found at 835-1118 (FWGPSGPVST…LRPALPRMAS (284 aa)). The segment at 969–1118 (SPMGVLLRMI…LRPALPRMAS (150 aa)) is UPA. The CARD domain maps to 1122-1211 (DAPALLHFVD…HLIMDLLEKS (90 aa)).

The protein belongs to the NLRP family. In terms of assembly, interacts (via LRR repeats) with BCL2 and BCL2L1 (via the loop between motifs BH4 and BH3). Interacts with NOD2; this interaction is enhanced in the presence of muramyl dipeptide (MDP) and increases IL1B release. Interacts with EIF2AK2/PKR; this interaction requires EIF2AK2 activity, is accompanied by EIF2AK2 autophosphorylation and promotes inflammasome assembly in response to danger-associated signals. Interacts with MEFV; this interaction targets Nlrp1a to degradation by autophagy, hence preventing excessive IL1B- and IL18-mediated inflammation. Interacts with DPP9; leading to inhibit activation of the inflammasome. DPP9 acts via formation of a ternary complex, composed of a DPP9 homodimer, one full-length NLRP1 protein, and one cleaved C-terminus of Nlrp1a (NACHT, LRR and PYD domains-containing protein 1a, C-terminus). Interacts with DPP8; leading to inhibit activation of the inflammasome, probably via formation of a ternary complex with DPP8. As to quaternary structure, interacts with the C-terminal part of Nlrp1a (NACHT, LRR and PYD domains-containing protein 1a, C-terminus) in absence of pathogens and other damage-associated signals. Interacts with the N-terminal part of Nlrp1a (NACHT, LRR and PYD domains-containing protein 1a, N-terminus) in absence of pathogens and other damage-associated signals. Homomultimer; forms the Nlrp1a inflammasome polymeric complex, a filament composed of homopolymers of this form in response to pathogens and other damage-associated signals. The Nlrp1a inflammasome polymeric complex directly recruits pro-caspase-1 (proCASP1) independently of PYCARD/ASC. Interacts (via CARD domain) with CASP1 (via CARD domain); leading to CASP1 activation. Post-translationally, autocatalytically cleaved. Autocatalytic cleavage in FIIND region occurs constitutively, prior to activation signals, and is required for inflammasome activity (IL1B release), possibly by facilitating CASP1 binding. Both N- and C-terminal parts remain associated non-covalently. (Microbial infection) Cleavage by B.anthracis lethal toxin (LT) endopeptidase promotes ubiquitination and degradation of the N-terminal part, releasing the cleaved C-terminal part of the protein (NACHT, LRR and PYD domains-containing protein 1a, C-terminus), which polymerizes and forms the Nlrp1a inflammasome. In terms of processing, ubiquitinated in response to pathogen-associated signals, leading to its degradation by the proteasome and subsequent release of the cleaved C-terminal part of the protein (NACHT, LRR and PYD domains-containing protein 1a, C-terminus), which polymerizes and forms the Nlrp1a inflammasome.

The protein localises to the cytoplasm. The protein resides in the cytosol. Its subcellular location is the nucleus. It localises to the inflammasome. With respect to regulation, activated by cleavage by B.anthracis lethal toxin (LT) endopeptidase. Cleavage by LT promotes ubiquitination and degradation of the N-terminal part, releasing the cleaved C-terminal part of the protein (NACHT, LRR and PYD domains-containing protein 1a, C-terminus), which polymerizes and forms the Nlrp1a inflammasome. Nlrp1a inflammasome is inhibited by DPP8 and DPP9, which sequester the C-terminal fragment of Nlrp1a (NACHT, LRR and PYD domains-containing protein 1a, C-terminus) in a ternary complex, thereby preventing Nlrp1a oligomerization and activation. Nlrp1a inflammasome is weakly activated by Val-boroPro (Talabostat, PT-100), an inhibitor of dipeptidyl peptidases DPP8 and DPP9. Val-boroPro relieves inhibition of DPP8 and/or DPP9 by promoting disruption of the ternary complex, releasing its C-terminal part from autoinhibition. Weakly activated by Toxoplasma gondii. Functionally, acts as the sensor component of the Nlrp1a inflammasome, which mediates inflammasome activation in response to various pathogen-associated signals, leading to subsequent pyroptosis. Inflammasomes are supramolecular complexes that assemble in the cytosol in response to pathogens and other damage-associated signals and play critical roles in innate immunity and inflammation. Acts as a recognition receptor (PRR): recognizes specific pathogens and other damage-associated signals, such as B.anthracis lethal toxin (LT) or Val-boroPro inhibitor, and mediates the formation of the inflammasome polymeric complex. In response to pathogen-associated signals, the N-terminal part of Nlrp1a is degraded by the proteasome, releasing the cleaved C-terminal part of the protein (NACHT, LRR and PYD domains-containing protein 1a, C-terminus), which polymerizes to initiate the formation of the inflammasome complex: the inflammasome directly recruits pro-caspase-1 (proCASP1) independently of PYCARD/ASC and promotes caspase-1 (CASP1) activation, which subsequently cleaves and activates inflammatory cytokines IL1B and IL18 and gasdermin-D (GSDMD), leading to pyroptosis. In the absence of GSDMD expression, the Nlrp1a inflammasome is able to recruit and activate CASP8, leading to activation of gasdermin-E (GSDME). Its function is as follows. Constitutes the precursor of the Nlrp1a inflammasome, which mediates autoproteolytic processing within the FIIND domain to generate the N-terminal and C-terminal parts, which are associated non-covalently in absence of pathogens and other damage-associated signals. In terms of biological role, regulatory part that prevents formation of the Nlrp1a inflammasome: in absence of pathogens and other damage-associated signals, interacts with the C-terminal part of Nlrp1a (NACHT, LRR and PYD domains-containing protein 1a, C-terminus), preventing activation of the Nlrp1a inflammasome. In response to pathogen-associated signals, this part is ubiquitinated by the N-end rule pathway and degraded by the proteasome, releasing the cleaved C-terminal part of the protein, which polymerizes and forms the Nlrp1a inflammasome. Constitutes the active part of the Nlrp1a inflammasome. In absence of pathogens and other damage-associated signals, interacts with the N-terminal part of Nlrp1a (NACHT, LRR and PYD domains-containing protein 1a, N-terminus), preventing activation of the Nlrp1a inflammasome. In response to pathogen-associated signals, the N-terminal part of Nlrp1a is degraded by the proteasome, releasing this form, which polymerizes to form the Nlrp1a inflammasome complex: the Nlrp1a inflammasome complex then directly recruits pro-caspase-1 (proCASP1) and promotes caspase-1 (CASP1) activation, leading to gasdermin-D (GSDMD) cleavage and subsequent pyroptosis. This is NACHT, LRR and PYD domains-containing protein 1 allele 2 from Rattus norvegicus (Rat).